We begin with the raw amino-acid sequence, 620 residues long: Chaperone protein HtpG (620 aa).

An a; substrate-binding region spans residues 1 to 334 (MTTTDTAPQS…SEDLPLNLSR (334 aa)). The tract at residues 335–548 (EMLQNNPQLA…GLGPDRALER (214 aa)) is b. A c region spans residues 549–620 (MLAQQNRGAA…RLNRLVLRAL (72 aa)).

This sequence belongs to the heat shock protein 90 family. In terms of assembly, homodimer.

It is found in the cytoplasm. Functionally, molecular chaperone. Has ATPase activity. This Rhodopseudomonas palustris (strain BisB18) protein is Chaperone protein HtpG.